The sequence spans 45 residues: Large ribosomal subunit protein bL36 (45 aa).

Belongs to the bacterial ribosomal protein bL36 family.

The protein is Large ribosomal subunit protein bL36 of Psychrobacter sp. (strain PRwf-1).